A 473-amino-acid polypeptide reads, in one-letter code: ATP synthase subunit beta (473 aa).

153-160 is a binding site for ATP; the sequence is GGAGVGKT.

Belongs to the ATPase alpha/beta chains family. In terms of assembly, F-type ATPases have 2 components, CF(1) - the catalytic core - and CF(0) - the membrane proton channel. CF(1) has five subunits: alpha(3), beta(3), gamma(1), delta(1), epsilon(1). CF(0) has three main subunits: a(1), b(2) and c(9-12). The alpha and beta chains form an alternating ring which encloses part of the gamma chain. CF(1) is attached to CF(0) by a central stalk formed by the gamma and epsilon chains, while a peripheral stalk is formed by the delta and b chains.

Its subcellular location is the cell inner membrane. It catalyses the reaction ATP + H2O + 4 H(+)(in) = ADP + phosphate + 5 H(+)(out). Functionally, produces ATP from ADP in the presence of a proton gradient across the membrane. The catalytic sites are hosted primarily by the beta subunits. The chain is ATP synthase subunit beta from Rickettsia canadensis (strain McKiel).